A 364-amino-acid chain; its full sequence is DNA polymerase IV (364 aa).

A UmuC domain is found at 14–198; the sequence is IIHIDMDAFF…LPVEKFHGVG (185 aa). Mg(2+) contacts are provided by Asp-18 and Asp-116. The active site involves Glu-117.

It belongs to the DNA polymerase type-Y family. Monomer. Mg(2+) is required as a cofactor.

Its subcellular location is the cytoplasm. It catalyses the reaction DNA(n) + a 2'-deoxyribonucleoside 5'-triphosphate = DNA(n+1) + diphosphate. In terms of biological role, poorly processive, error-prone DNA polymerase involved in untargeted mutagenesis. Copies undamaged DNA at stalled replication forks, which arise in vivo from mismatched or misaligned primer ends. These misaligned primers can be extended by PolIV. Exhibits no 3'-5' exonuclease (proofreading) activity. May be involved in translesional synthesis, in conjunction with the beta clamp from PolIII. The protein is DNA polymerase IV of Lactococcus lactis subsp. cremoris (strain SK11).